The primary structure comprises 79 residues: Large ribosomal subunit protein uL24 (79 aa).

The protein belongs to the universal ribosomal protein uL24 family. Part of the 50S ribosomal subunit.

One of two assembly initiator proteins, it binds directly to the 5'-end of the 23S rRNA, where it nucleates assembly of the 50S subunit. In terms of biological role, one of the proteins that surrounds the polypeptide exit tunnel on the outside of the subunit. This chain is Large ribosomal subunit protein uL24, found in Aliarcobacter butzleri (strain RM4018) (Arcobacter butzleri).